Reading from the N-terminus, the 321-residue chain is Calcium-binding protein LPS1-alpha (321 aa).

EF-hand domains are found at residues 15–49 (DAIE…NWTE), 47–82 (WTEE…STKE), 85–120 (YSSD…IYTK), 121–156 (VVDG…KLPI), 165–200 (EYRE…STKY), 200–233 (YSDK…DGVS), 232–267 (VSKD…IYRQ), and 269–304 (VDFE…NCPY). Ca(2+)-binding residues include Asp-29, Asn-31, Asp-33, Thr-35, Glu-40, Asp-60, Asn-62, Asp-64, His-66, Glu-71, Asp-98, Asp-100, Asn-102, Arg-104, Glu-109, Asp-134, Asp-136, Asp-138, His-140, Glu-145, Asp-178, Asn-180, Asp-182, Ser-184, Glu-189, Asp-213, Asn-215, Asp-217, Arg-219, Glu-224, Asp-245, Asp-247, Asn-249, Lys-251, Glu-256, Asp-284, Asp-286, Tyr-288, and Glu-293.

Aboral ectoderm, a squamous epithelium covering the surface of the late stage embryo and larva.

In terms of biological role, calcium-binding protein involved in larval development and metamorphosis. Likely to function as calcium buffers mediating the transport of calcium from the sea water to the blastocoel where calcium is required for skeleton formation. This is Calcium-binding protein LPS1-alpha from Lytechinus pictus (Painted sea urchin).